We begin with the raw amino-acid sequence, 537 residues long: Putative cysteine ligase BshC (537 aa).

The stretch at 422–450 (IEKVEGMIEQQRRLNKDLLDEVAGNQNNI) forms a coiled coil.

It belongs to the BshC family.

Functionally, involved in bacillithiol (BSH) biosynthesis. May catalyze the last step of the pathway, the addition of cysteine to glucosamine malate (GlcN-Mal) to generate BSH. This chain is Putative cysteine ligase BshC, found in Staphylococcus aureus (strain USA300).